The following is a 156-amino-acid chain: 6,7-dimethyl-8-ribityllumazine synthase (156 aa).

5-amino-6-(D-ribitylamino)uracil contacts are provided by residues Phe23, 57–59 (AFE), and 81–83 (AVI). Residue 86 to 87 (AT) coordinates (2S)-2-hydroxy-3-oxobutyl phosphate. Catalysis depends on His89, which acts as the Proton donor. Residue Asn114 coordinates 5-amino-6-(D-ribitylamino)uracil. Residue Arg128 coordinates (2S)-2-hydroxy-3-oxobutyl phosphate.

It belongs to the DMRL synthase family.

The enzyme catalyses (2S)-2-hydroxy-3-oxobutyl phosphate + 5-amino-6-(D-ribitylamino)uracil = 6,7-dimethyl-8-(1-D-ribityl)lumazine + phosphate + 2 H2O + H(+). Its pathway is cofactor biosynthesis; riboflavin biosynthesis; riboflavin from 2-hydroxy-3-oxobutyl phosphate and 5-amino-6-(D-ribitylamino)uracil: step 1/2. In terms of biological role, catalyzes the formation of 6,7-dimethyl-8-ribityllumazine by condensation of 5-amino-6-(D-ribitylamino)uracil with 3,4-dihydroxy-2-butanone 4-phosphate. This is the penultimate step in the biosynthesis of riboflavin. This chain is 6,7-dimethyl-8-ribityllumazine synthase, found in Aliarcobacter butzleri (strain RM4018) (Arcobacter butzleri).